A 116-amino-acid polypeptide reads, in one-letter code: Antimicrobial peptide 1b (116 aa).

The N-terminal stretch at 1 to 34 is a signal peptide; the sequence is MKPHMSATVLRAPRVAAILLAVVLAAVLATAVNG. Residues 35–77 enclose the Chitin-binding type-1 domain; sequence AQRCGDQARGAKCPNCLCCGKYGFCGSGDAYCGAGSCQSQCRG. 5 disulfide bridges follow: Cys-38-Cys-53, Cys-47-Cys-59, Cys-50-Cys-78, Cys-52-Cys-66, and Cys-71-Cys-75. Residues 80-116 constitute a propeptide that is removed on maturation; sequence DDVVGQALPAEPGSTRATAASSASARGLNLTATTGGP. Residues 89-116 form a disordered region; sequence AEPGSTRATAASSASARGLNLTATTGGP. Over residues 93-105 the composition is skewed to low complexity; sequence STRATAASSASAR.

In terms of biological role, binds chitin. Has antifungal activity against the fungi F.solani (IC(50)=5 ug/ml), F.verticillioides (IC(50)=30 ug/ml), F.oxysporum (IC(50)=5 ug/ml), B.sorokiniana (IC(50)=5 ug/ml), B.cinerea (IC(50)=20 ug/ml) and N.crassa (IC(50)=10 ug/ml). Inhibits hyphal elongation and causes browning of hyphae in F.oxysporum. Causes destruction and discoloration of spores in B.sorokiniana. Inhibits the development of disease caused by the fungus P.infestans on potato tubers. Has antibacterial activity against the Gram-negative bacteria P.syringae and E.carotovora, and the Gram-positive bacterium C.michiganensis. Has antifungal activity against F.verticillioides (IC(50)=2.7 ug/ml). At concentrations between 45 uM and 225 uM, inhibits activity of metalloproteinase fungalysin Fv-cpm from F.verticillioides. In Triticum kiharae (Wheat), this protein is Antimicrobial peptide 1b.